The chain runs to 359 residues: Alanine racemase (359 aa).

Residue K34 is the Proton acceptor; specific for D-alanine of the active site. Position 34 is an N6-(pyridoxal phosphate)lysine (K34). Residue R129 coordinates substrate. Y255 acts as the Proton acceptor; specific for L-alanine in catalysis. A substrate-binding site is contributed by M303.

It belongs to the alanine racemase family. The cofactor is pyridoxal 5'-phosphate.

The catalysed reaction is L-alanine = D-alanine. The protein operates within amino-acid biosynthesis; D-alanine biosynthesis; D-alanine from L-alanine: step 1/1. Catalyzes the interconversion of L-alanine and D-alanine. May also act on other amino acids. This Shigella dysenteriae serotype 1 (strain Sd197) protein is Alanine racemase (alr).